Here is a 965-residue protein sequence, read N- to C-terminus: Glycine dehydrogenase (decarboxylating) (965 aa).

Lysine 711 carries the N6-(pyridoxal phosphate)lysine modification.

The protein belongs to the GcvP family. As to quaternary structure, the glycine cleavage system is composed of four proteins: P, T, L and H. Pyridoxal 5'-phosphate is required as a cofactor.

It catalyses the reaction N(6)-[(R)-lipoyl]-L-lysyl-[glycine-cleavage complex H protein] + glycine + H(+) = N(6)-[(R)-S(8)-aminomethyldihydrolipoyl]-L-lysyl-[glycine-cleavage complex H protein] + CO2. Its function is as follows. The glycine cleavage system catalyzes the degradation of glycine. The P protein binds the alpha-amino group of glycine through its pyridoxal phosphate cofactor; CO(2) is released and the remaining methylamine moiety is then transferred to the lipoamide cofactor of the H protein. This is Glycine dehydrogenase (decarboxylating) from Psychrobacter cryohalolentis (strain ATCC BAA-1226 / DSM 17306 / VKM B-2378 / K5).